Consider the following 114-residue polypeptide: T cell receptor beta variable 6-2 (114 aa).

Positions 1 to 21 (MSLGLLCCGAFSLLWAGPVNA) are cleaved as a signal peptide. The Ig-like domain maps to 22-114 (GVTQTPKFRV…TSVYFCASSY (93 aa)). C42 and C110 are joined by a disulfide. Residue N84 is glycosylated (N-linked (GlcNAc...) asparagine).

Alpha-beta TR is a heterodimer composed of an alpha and beta chain; disulfide-linked. The alpha-beta TR is associated with the transmembrane signaling CD3 coreceptor proteins to form the TR-CD3 (TcR or TCR). The assembly of alpha-beta TR heterodimers with CD3 occurs in the endoplasmic reticulum where a single alpha-beta TR heterodimer associates with one CD3D-CD3E heterodimer, one CD3G-CD3E heterodimer and one CD247 homodimer forming a stable octameric structure. CD3D-CD3E and CD3G-CD3E heterodimers preferentially associate with TR alpha and TR beta chains, respectively. The association of the CD247 homodimer is the last step of TcR assembly in the endoplasmic reticulum and is required for transport to the cell surface.

The protein resides in the cell membrane. In terms of biological role, v region of the variable domain of T cell receptor (TR) beta chain that participates in the antigen recognition. Alpha-beta T cell receptors are antigen specific receptors which are essential to the immune response and are present on the cell surface of T lymphocytes. Recognize peptide-major histocompatibility (MH) (pMH) complexes that are displayed by antigen presenting cells (APC), a prerequisite for efficient T cell adaptive immunity against pathogens. Binding of alpha-beta TR to pMH complex initiates TR-CD3 clustering on the cell surface and intracellular activation of LCK that phosphorylates the ITAM motifs of CD3G, CD3D, CD3E and CD247 enabling the recruitment of ZAP70. In turn ZAP70 phosphorylates LAT, which recruits numerous signaling molecules to form the LAT signalosome. The LAT signalosome propagates signal branching to three major signaling pathways, the calcium, the mitogen-activated protein kinase (MAPK) kinase and the nuclear factor NF-kappa-B (NF-kB) pathways, leading to the mobilization of transcription factors that are critical for gene expression and essential for T cell growth and differentiation. The T cell repertoire is generated in the thymus, by V-(D)-J rearrangement. This repertoire is then shaped by intrathymic selection events to generate a peripheral T cell pool of self-MH restricted, non-autoaggressive T cells. Post-thymic interaction of alpha-beta TR with the pMH complexes shapes TR structural and functional avidity. This Homo sapiens (Human) protein is T cell receptor beta variable 6-2.